The following is a 2145-amino-acid chain: Adenylate cyclase (2145 aa).

Disordered regions lie at residues 1 to 115 (MPRN…RMSD), 127 to 236 (DPAG…SGAR), 266 to 307 (GKEH…PVPK), and 329 to 547 (VRDI…GPTD). 3 stretches are compositionally biased toward low complexity: residues 7-23 (SSRF…SARS), 35-68 (PSAS…APSR), and 89-107 (SPTS…SSNS). 2 stretches are compositionally biased toward polar residues: residues 134-148 (SRTQ…SLSQ) and 159-205 (PASS…TESP). Residues 217-234 (SIASITTTASSQGSRASG) are compositionally biased toward low complexity. Positions 269–281 (HRSHSYSHARPHR) are enriched in basic residues. Residues 343-357 (NDSSQQNNPPKTSGS) show a composition bias toward polar residues. A compositionally biased stretch (basic and acidic residues) spans 377 to 403 (KSNEDPRSLRPTVSREDSTISVPKDRN). Over residues 404–441 (GSSTMYGTRSRAQSPAPSTTGSYWGHKSGSTDGQTSPG) the composition is skewed to polar residues. Composition is skewed to basic and acidic residues over residues 454–466 (RLKE…DLKK) and 495–511 (ADGK…RPDL). In terms of domain architecture, Ras-associating spans 637–727 (HNYCIRVFRA…IEDIGREDNS (91 aa)). LRR repeat units follow at residues 779 to 800 (EIIS…FISV), 803 to 824 (NLRD…FGYA), 826 to 847 (RLTM…ALHN), 850 to 871 (GLLK…FEAF), 873 to 894 (VLRT…LAKL), 896 to 917 (NLVD…VGQM), 919 to 941 (SLER…FKNL), 943 to 964 (SLRE…SQLP), 965 to 986 (KLEI…FERV), 987 to 1006 (RSIK…APVP), 1007 to 1028 (TLKA…FHNM), 1030 to 1051 (NLER…IGNL), 1053 to 1074 (RLEY…IGCL), 1076 to 1097 (ELKR…LWWA), and 1099 to 1120 (KLDY…ASRA). Residues 1114 to 1226 (PKPASRAPHP…SSRKDSSHTQ (113 aa)) are disordered. Composition is skewed to low complexity over residues 1160-1179 (RPSQ…VPGG) and 1201-1217 (SRST…PTAS). LRR repeat units lie at residues 1235–1255 (SLRY…DQLC), 1259–1280 (NLRV…SIKS), 1283–1304 (QLVE…DLEE), 1307–1328 (MLQT…ISRA), 1330–1352 (KLTV…PYDW), and 1359–1380 (NLRY…SVPT). The PPM-type phosphatase domain maps to 1432–1709 (PYGMADTLGS…NKMTVQMLGV (278 aa)). Residues 1718-1760 (RSRQHKGQSMPVYASLQDDGGSSTGMRRARKARDGPLDSTLGR) form a disordered region. A Guanylate cyclase domain is found at 1773-1910 (AIVFTDIKNS…PMVNKASRIS (138 aa)). 2 residues coordinate Mg(2+): aspartate 1778 and aspartate 1821.

This sequence belongs to the adenylyl cyclase class-3 family. Mg(2+) is required as a cofactor.

It carries out the reaction ATP = 3',5'-cyclic AMP + diphosphate. Plays essential roles in regulation of cellular metabolism by catalyzing the synthesis of a second messenger, cAMP. The chain is Adenylate cyclase from Podospora anserina (Pleurage anserina).